The primary structure comprises 217 residues: MTTIAIVDYGVGNLRSVAQALRAAAPEADVRVVDAPEGIRSADRVVLPGQGAMPDCMSALGASGLQEAVIEAAASKPMFGVCVGEQMLFESSSEARPGTDKTPCLGLMPGEVIRFELDGMTQPDGSRYKVPQMGWNRVKQSRPHPLWDGIPDESWFYFVHSYFVRAQDPAHIAGETEYGVVFTSAVARDNIFATQFHPEKSAAMGLQLYRNFVHWNP.

The Glutamine amidotransferase type-1 domain maps to 3–217 (TIAIVDYGVG…LYRNFVHWNP (215 aa)). The Nucleophile role is filled by C82. Catalysis depends on residues H197 and E199.

As to quaternary structure, heterodimer of HisH and HisF.

The protein localises to the cytoplasm. It carries out the reaction 5-[(5-phospho-1-deoxy-D-ribulos-1-ylimino)methylamino]-1-(5-phospho-beta-D-ribosyl)imidazole-4-carboxamide + L-glutamine = D-erythro-1-(imidazol-4-yl)glycerol 3-phosphate + 5-amino-1-(5-phospho-beta-D-ribosyl)imidazole-4-carboxamide + L-glutamate + H(+). The enzyme catalyses L-glutamine + H2O = L-glutamate + NH4(+). The protein operates within amino-acid biosynthesis; L-histidine biosynthesis; L-histidine from 5-phospho-alpha-D-ribose 1-diphosphate: step 5/9. IGPS catalyzes the conversion of PRFAR and glutamine to IGP, AICAR and glutamate. The HisH subunit catalyzes the hydrolysis of glutamine to glutamate and ammonia as part of the synthesis of IGP and AICAR. The resulting ammonia molecule is channeled to the active site of HisF. This Cupriavidus pinatubonensis (strain JMP 134 / LMG 1197) (Cupriavidus necator (strain JMP 134)) protein is Imidazole glycerol phosphate synthase subunit HisH.